The following is a 718-amino-acid chain: Phenylalanine--tRNA ligase beta subunit (718 aa).

The tRNA-binding domain occupies 40–153; sequence FLNVSKIKFG…KADLKQDPID (114 aa). The 76-residue stretch at 387 to 462 folds into the B5 domain; sequence DKKESFNFVW…RFYGYENLVF (76 aa). Positions 440, 446, 449, and 450 each coordinate Mg(2+).

The protein belongs to the phenylalanyl-tRNA synthetase beta subunit family. Type 1 subfamily. Tetramer of two alpha and two beta subunits. Mg(2+) serves as cofactor.

The protein resides in the cytoplasm. It carries out the reaction tRNA(Phe) + L-phenylalanine + ATP = L-phenylalanyl-tRNA(Phe) + AMP + diphosphate + H(+). This chain is Phenylalanine--tRNA ligase beta subunit, found in Mycoplasmopsis pulmonis (strain UAB CTIP) (Mycoplasma pulmonis).